We begin with the raw amino-acid sequence, 558 residues long: T-complex protein 1 subunit eta (558 aa).

The disordered stretch occupies residues 524–558 (VRNPKSEQPKAPPGGLRRGGPQGMAGLAKNARLGK).

The protein belongs to the TCP-1 chaperonin family. As to quaternary structure, heterooligomeric complex of about 850 to 900 kDa that forms two stacked rings, 12 to 16 nm in diameter.

Its subcellular location is the cytoplasm. In terms of biological role, molecular chaperone; assists the folding of proteins upon ATP hydrolysis. Known to play a role, in vitro, in the folding of actin and tubulin. This Tetrahymena pyriformis protein is T-complex protein 1 subunit eta.